Here is a 197-residue protein sequence, read N- to C-terminus: Lactoylglutathione lyase-like protein terB (197 aa).

Residues 1–19 (MARFAVLQLLLPLAAGLTG) form the signal peptide. N-linked (GlcNAc...) asparagine glycans are attached at residues Asn82, Asn99, and Asn140.

The protein belongs to the glyoxalase I family.

In terms of biological role, lactoylglutathione lyase-like protein; part of the gene cluster that mediates the biosynthesis of terrein, a fungal metabolite with ecological, antimicrobial, antiproliferative, and antioxidative activities. The first step in the pathway is performed by the polyketide synthase terA that produces 4-hydroxy-6-methylpyranon (4-HMP), orsellinic acid (OA), and 2,3-dehydro-6-hydroxymellein (2,3-dehydro-6-HM) by condensing acetyl-CoA with two, three, or four malonyl-CoA units, respectively. 4-HMP and OA are not pathway intermediates, but are rather shunt or side products. 2,3-dehydro-6-HM is further converted to 6-hydroxymellein (6-HM) by the 6-hydroxymellein synthase terB. The monooxygenases terC and terD, the multicopper oxidase terE and the Kelch-like protein terF are then involved in the transformation of 6-HM to terrein. Even if they are co-regulated with the other terrein cluster genes, terH and terI seem to be dispensable for terrein production; whereas one or both of the 2 transporters terG and terJ are probably required for efficient secretion of metabolites. The polypeptide is Lactoylglutathione lyase-like protein terB (Aspergillus terreus (strain NIH 2624 / FGSC A1156)).